Consider the following 168-residue polypeptide: MKFFSNFFKNKNNLSSHNVINIFAPISGDIVEIESVPDEVFSNKIVGDGIAISPNSNILLAPINGTIGRIFETLHAFSIKSDDDIELFVHFGIDTVKLKGRGFKKISEENIAVKIGDPIIFIDLPFLKKLVKSTLTPVIISNIDKFKKITKNTGSVIAGKTVIFSVQK.

Residues 38-142 enclose the PTS EIIA type-1 domain; the sequence is DEVFSNKIVG…STLTPVIISN (105 aa). Histidine 75 and histidine 90 together coordinate Zn(2+). Histidine 90 acts as the Tele-phosphohistidine intermediate; for EIIA activity in catalysis. Residue histidine 90 is modified to Phosphohistidine; by HPr.

Requires Zn(2+) as cofactor.

Its subcellular location is the cytoplasm. The phosphoenolpyruvate-dependent sugar phosphotransferase system (sugar PTS), a major carbohydrate active transport system, catalyzes the phosphorylation of incoming sugar substrates concomitantly with their translocation across the cell membrane. The enzyme II complex composed of PtsG and Crr is involved in glucose transport. The protein is PTS system glucose-specific EIIA component (crr) of Buchnera aphidicola subsp. Baizongia pistaciae (strain Bp).